A 723-amino-acid polypeptide reads, in one-letter code: MQGQTQSISFDGREIRLTTGRYAPQAGGSVMMECGDTAVLVTATRSTGREGIDFLPLICDYEERLYAAGRIPGSFMRREGRPPERATLIARLIDRPMRPLFPSWMRDDLQIVATCLSLDERVPADVLAVTGASMATLLASIPFQGPMAAVRVGLLGDDFVLNPSYREIERGDLDLVVAGTPDGVVMVEAGANQLPQGDVIEAIDFGYEAVCELIKAQQTILKDAGIKQVQPEPPTQDQDTKLSTYLEKNCSKSIGEVLKQFEQTKAERDSKLDAIKAKTAEAIDSLKEDDAVRKSVNANSKVLSNNFKALTKKLMREQIIKQGKRVDGRKLDEVRPISSAAGVLPKRVHGSGLFQRGLTQVLSTATLGTPSDAQEMDDLNPGPEKTYLHHYNFPPYSVGETRPMRSPGRREVGHGSLAERAIIPVLPPKDSFPYVLRVVSEVLSSNGSTSMGSVCGSTLALMDAGVPLKAPVSGAAMGLIKEDAEIRILTDIQGIEDFLGDMDFKVAGTKDGITALQMDMKITGLPVKTIAEAVNQARPARIHILEKMLEAIDAPRTTLSPHAPRLLSFRIDPELIGTVIGPGGRTIKGITERTNTKIDIEDGGIVTIASHDGAAAEAAQRIIEGLTRKVNEGEVFTGTITRIIPIGAFVEILPGKEGMIHISQLSEARVEKVDDVVKVGDQVTVRIREIDNRGRINLTLRGVPQNGEETQSEPAPTPVAPLN.

2 residues coordinate Mg(2+): Asp497 and Asp503. A KH domain is found at 564–623; sequence PRLLSFRIDPELIGTVIGPGGRTIKGITERTNTKIDIEDGGIVTIASHDGAAAEAAQRII. One can recognise an S1 motif domain in the interval 633–701; sequence GEVFTGTITR…NRGRINLTLR (69 aa). Residues 701-723 are disordered; sequence RGVPQNGEETQSEPAPTPVAPLN.

The protein belongs to the polyribonucleotide nucleotidyltransferase family. Mg(2+) serves as cofactor.

The protein resides in the cytoplasm. It carries out the reaction RNA(n+1) + phosphate = RNA(n) + a ribonucleoside 5'-diphosphate. In terms of biological role, involved in mRNA degradation. Catalyzes the phosphorolysis of single-stranded polyribonucleotides processively in the 3'- to 5'-direction. The chain is Polyribonucleotide nucleotidyltransferase from Prochlorococcus marinus (strain MIT 9313).